Here is a 969-residue protein sequence, read N- to C-terminus: Levansucrase (969 aa).

Positions 1 to 52 (MDITVNSQSNTVAPKQAECKKMRYSIRKVATVGATSALVGTLAFLGATQVKA) are cleaved as a signal peptide. Residues 89-103 (SEAVESSVAHSEVAT) show a composition bias toward low complexity. A disordered region spans residues 89–169 (SEAVESSVAH…STASSEAADT (81 aa)). Polar residues predominate over residues 106–116 (VTETQPSNTTP). Residues 124–166 (SSTVVTSSSDATTPSATVAAVSAPAHTSEAAVEAPTSTASSEA) show a composition bias toward low complexity. Residues Trp-286, Asp-287, and Ser-356 each coordinate sucrose. The active-site Nucleophile is Asp-287. Residue Asp-443 participates in Ca(2+) binding. Residues Arg-448 and Asp-449 each coordinate sucrose. Ca(2+)-binding residues include Gln-473, Asn-512, and Asp-544. Glu-545 provides a ligand contact to sucrose. Glu-547 (proton donor/acceptor) is an active-site residue. Residue Arg-565 coordinates sucrose. 2 disordered regions span residues 746-843 (VKDG…VGDR) and 860-934 (IVAT…SEGS). Over residues 747 to 758 (KDGKDKKADKPE) the composition is skewed to basic and acidic residues. A compositionally biased stretch (polar residues) spans 776–789 (KPGTSKPADNNQPS). Positions 872–910 (VKEESVTETEAPKPVKSEEKVQSHGVDKANEVTKSDESS) are enriched in basic and acidic residues. The span at 924–934 (TPKTPSDSEGS) shows a compositional bias: polar residues. A helical transmembrane segment spans residues 938 to 958 (ILSILATIFAAIASLALLGYG).

It belongs to the glycosyl hydrolase 68 family.

The protein resides in the cell membrane. It is found in the cell surface. It carries out the reaction [6)-beta-D-fructofuranosyl-(2-&gt;](n) alpha-D-glucopyranoside + sucrose = [6)-beta-D-fructofuranosyl-(2-&gt;](n+1) alpha-D-glucopyranoside + D-glucose. Ca(2+) may play an important structural role and promote stability of levansucrase. In terms of biological role, catalyzes the synthesis of levan, a fructose polymer, by transferring the fructosyl moiety from sucrose to a growing acceptor molecule. Also displays sucrose hydrolase activity. This chain is Levansucrase, found in Streptococcus salivarius.